Here is a 320-residue protein sequence, read N- to C-terminus: Cytochrome c biogenesis protein CcsA (320 aa).

Transmembrane regions (helical) follow at residues 9–29, 36–56, 70–90, 97–117, 143–163, 227–247, 254–274, and 288–308; these read ILAH…WGTL, LSSS…GLLI, LYES…LLEV, WLGA…TLGL, ILFS…LLVI, AIGL…IWAN, WSWD…AIYL, and AIVA…VNLL.

Belongs to the CcmF/CycK/Ccl1/NrfE/CcsA family. As to quaternary structure, may interact with Ccs1.

The protein localises to the plastid. It is found in the chloroplast thylakoid membrane. In terms of biological role, required during biogenesis of c-type cytochromes (cytochrome c6 and cytochrome f) at the step of heme attachment. The protein is Cytochrome c biogenesis protein CcsA of Pinus thunbergii (Japanese black pine).